Here is a 75-residue protein sequence, read N- to C-terminus: Large ribosomal subunit protein eL14 (75 aa).

It belongs to the eukaryotic ribosomal protein eL14 family.

This chain is Large ribosomal subunit protein eL14, found in Methanothermobacter thermautotrophicus (strain ATCC 29096 / DSM 1053 / JCM 10044 / NBRC 100330 / Delta H) (Methanobacterium thermoautotrophicum).